The following is a 63-amino-acid chain: Synergistic-type venom protein C9S3, chain 2 (63 aa).

3 disulfide bridges follow: cysteine 3-cysteine 24, cysteine 17-cysteine 42, and cysteine 46-cysteine 57.

This sequence belongs to the three-finger toxin family. Short-chain subfamily. Aminergic toxin sub-subfamily. Heterodimer of C9S3 chain 1 (AC P01408) and chain 2, linked by at least two disulfide bonds. Expressed by the venom gland.

The protein resides in the secreted. In terms of biological role, this protein shows a synergetic toxic effect in that it enhances the toxicity of other D.angusticeps toxins. The protein is Synergistic-type venom protein C9S3, chain 2 of Dendroaspis angusticeps (Eastern green mamba).